The following is a 94-amino-acid chain: RxLR effector protein PITG_15972 (94 aa).

The signal sequence occupies residues 1 to 21 (MRAVYILAMACAATLQASSSA). The RxLR-dEER motif lies at 50–65 (RLLRVEDKEEETEEER).

The protein belongs to the RxLR effector family.

The protein resides in the secreted. The protein localises to the host cytoplasm. It localises to the host nucleus. Its function is as follows. Effector that enhances P.infestans colonization of Nicotiana benthamiana leaves. The chain is RxLR effector protein PITG_15972 from Phytophthora infestans (strain T30-4) (Potato late blight agent).